The following is a 254-amino-acid chain: Large ribosomal subunit protein uL2 (254 aa).

It belongs to the universal ribosomal protein uL2 family. Component of the large ribosomal subunit. Mature ribosomes consist of a small (40S) and a large (60S) subunit. The 40S subunit contains about 32 different proteins and 1 molecule of RNA (18S). The 60S subunit contains 45 different proteins and 3 molecules of RNA (25S, 5.8S and 5S).

It is found in the cytoplasm. In terms of biological role, component of the ribosome, a large ribonucleoprotein complex responsible for the synthesis of proteins in the cell. The small ribosomal subunit (SSU) binds messenger RNAs (mRNAs) and translates the encoded message by selecting cognate aminoacyl-transfer RNA (tRNA) molecules. The large subunit (LSU) contains the ribosomal catalytic site termed the peptidyl transferase center (PTC), which catalyzes the formation of peptide bonds, thereby polymerizing the amino acids delivered by tRNAs into a polypeptide chain. The nascent polypeptides leave the ribosome through a tunnel in the LSU and interact with protein factors that function in enzymatic processing, targeting, and the membrane insertion of nascent chains at the exit of the ribosomal tunnel. The chain is Large ribosomal subunit protein uL2 from Candida albicans (strain SC5314 / ATCC MYA-2876) (Yeast).